The following is a 308-amino-acid chain: N-acetyl-gamma-glutamyl-phosphate reductase (308 aa).

The active site involves Cys117.

This sequence belongs to the NAGSA dehydrogenase family. Type 2 subfamily.

The protein resides in the cytoplasm. The enzyme catalyses N-acetyl-L-glutamate 5-semialdehyde + phosphate + NADP(+) = N-acetyl-L-glutamyl 5-phosphate + NADPH + H(+). Its pathway is amino-acid biosynthesis; L-arginine biosynthesis; N(2)-acetyl-L-ornithine from L-glutamate: step 3/4. Its function is as follows. Catalyzes the NADPH-dependent reduction of N-acetyl-5-glutamyl phosphate to yield N-acetyl-L-glutamate 5-semialdehyde. This is N-acetyl-gamma-glutamyl-phosphate reductase from Sinorhizobium fredii (strain NBRC 101917 / NGR234).